Here is a 545-residue protein sequence, read N- to C-terminus: Serine/threonine-protein kinase PAK 1 (545 aa).

The segment at 1-77 (MSNNGLDIQD…KEKERPEISL (77 aa)) is disordered. The residue at position 2 (S2) is an N-acetylserine. At S21 the chain carries Phosphoserine; by PKB and autocatalysis. Residue S57 is modified to Phosphoserine; by autocatalysis. Residues 68 to 77 (KEKERPEISL) are compositionally biased toward basic and acidic residues. Positions 70-140 (KERPEISLPS…YNSKKTSNSQ (71 aa)) are autoregulatory region. The CRIB domain occupies 75-88 (ISLPSDFEHTIHVG). The GTPase-binding stretch occupies residues 75-105 (ISLPSDFEHTIHVGFDAVTGEFTGMPEQWAR). Position 84 is a phosphothreonine; by OXSR1 (T84). S115 is modified (phosphoserine). Phosphotyrosine occurs at positions 131 and 142. A Phosphoserine; by autocatalysis modification is found at S144. S149 bears the Phosphoserine mark. Y153 is modified (phosphotyrosine; by JAK2). The segment at 159 to 198 (LNVKAVSETPAVPPVSEDEDDDDDDATPPPVIAPRPEHTK) is disordered. The residue at position 174 (S174) is a Phosphoserine. Over residues 174 to 184 (SEDEDDDDDDA) the composition is skewed to acidic residues. Residue T185 is modified to Phosphothreonine. Position 199 is a phosphoserine; by autocatalysis (S199). Residue Y201 is modified to Phosphotyrosine; by JAK2. Phosphoserine is present on S204. A disordered region spans residues 211–251 (VTPTRDVATSPISPTENNTTPPDALTRNTEKQKKKPKMSDE). T212 and T219 each carry phosphothreonine. Phosphoserine occurs at positions 220 and 223. Positions 220-231 (SPISPTENNTTP) are enriched in polar residues. A phosphothreonine mark is found at T225, T229, and T230. A Protein kinase domain is found at 270 to 521 (YTRFEKIGQG…AKELLQHQFL (252 aa)). 276–284 (IGQGASGTV) serves as a coordination point for ATP. A Phosphotyrosine; by JAK2 modification is found at Y285. ATP contacts are provided by residues K299 and 345–347 (EYL). D389 functions as the Proton acceptor in the catalytic mechanism. T423 bears the Phosphothreonine; by autocatalysis, BRSK2 and PDPK1 mark.

Belongs to the protein kinase superfamily. STE Ser/Thr protein kinase family. STE20 subfamily. In terms of assembly, homodimer; homodimerization results in autoinhibition. Active as monomer. Interacts with GIT1. Component of cytoplasmic complexes, which also contains PXN, ARHGEF7 and GIT1. Interacts with NISCH. Interacts with DVL1; mediates the formation of a DVL1, MUSK and PAK1 ternary complex involved in AChR clustering. Binds to the caspase-cleaved p110 isoform of CDC2L1 and CDC2L2, p110C, but not the full-length proteins. Interacts with ARHGEF7. Interacts tightly with GTP-bound but not GDP-bound CDC42/P21 and RAC1. Interacts with SCRIB. Interacts with PDPK1. Interacts (via kinase domain) with RAF1. Interacts with NCK1 and NCK2. Interacts with TBCB. Interacts with BRSK2. Interacts with SNAI1. Interacts with CIB1 isoform 2. Interacts with CIB1 (via N-terminal region); the interaction is direct, promotes PAK1 activity and occurs in a calcium-dependent manner. Interacts with INPP5K. Interacts with gamma-tubulin. Interacts with RHOU; the interaction promotes PAK1 activation. It depends on Mg(2+) as a cofactor. In terms of processing, autophosphorylated in trans, meaning that in a dimer, one kinase molecule phosphorylates the other one. Activated by autophosphorylation at Thr-423 in response to a conformation change, triggered by interaction with GTP-bound CDC42 or RAC1. Activated by phosphorylation at Thr-423 by BRSK2 and by PDPK1. Phosphorylated by JAK2 in response to PRL; this increases PAK1 kinase activity. Phosphorylated at Ser-21 by PKB/AKT; this reduces interaction with NCK1 and association with focal adhesion sites. Upon DNA damage, phosphorylated at Thr-212 and translocates to the nucleoplasm. Phosphorylated at tyrosine residues, which can be enhanced by NTN1. Overexpressed in gastric cancer cells and tissues (at protein level).

The protein localises to the cytoplasm. The protein resides in the cell junction. Its subcellular location is the focal adhesion. It is found in the cell projection. It localises to the lamellipodium. The protein localises to the cell membrane. The protein resides in the ruffle membrane. Its subcellular location is the invadopodium. It is found in the nucleus. It localises to the nucleoplasm. The protein localises to the chromosome. The protein resides in the cytoskeleton. Its subcellular location is the microtubule organizing center. It is found in the centrosome. The catalysed reaction is L-seryl-[protein] + ATP = O-phospho-L-seryl-[protein] + ADP + H(+). The enzyme catalyses L-threonyl-[protein] + ATP = O-phospho-L-threonyl-[protein] + ADP + H(+). With respect to regulation, activated by binding small G proteins. Binding of GTP-bound CDC42 or RAC1 to the autoregulatory region releases monomers from the autoinhibited dimer, and enables activation by phosphorylation of Thr-423. Phosphorylation of Thr-84 by OXSR1 inhibits activation. Its function is as follows. Protein kinase involved in intracellular signaling pathways downstream of integrins and receptor-type kinases that plays an important role in cytoskeleton dynamics, in cell adhesion, migration, proliferation, apoptosis, mitosis, and in vesicle-mediated transport processes. Can directly phosphorylate BAD and protects cells against apoptosis. Activated by interaction with CDC42 and RAC1. Functions as a GTPase effector that links the Rho-related GTPases CDC42 and RAC1 to the JNK MAP kinase pathway. Phosphorylates and activates MAP2K1, and thereby mediates activation of downstream MAP kinases. Involved in the reorganization of the actin cytoskeleton, actin stress fibers and of focal adhesion complexes. Phosphorylates the tubulin chaperone TBCB and thereby plays a role in the regulation of microtubule biogenesis and organization of the tubulin cytoskeleton. Plays a role in the regulation of insulin secretion in response to elevated glucose levels. Part of a ternary complex that contains PAK1, DVL1 and MUSK that is important for MUSK-dependent regulation of AChR clustering during the formation of the neuromuscular junction (NMJ). Activity is inhibited in cells undergoing apoptosis, potentially due to binding of CDC2L1 and CDC2L2. Phosphorylates MYL9/MLC2. Phosphorylates RAF1 at 'Ser-338' and 'Ser-339' resulting in: activation of RAF1, stimulation of RAF1 translocation to mitochondria, phosphorylation of BAD by RAF1, and RAF1 binding to BCL2. Phosphorylates SNAI1 at 'Ser-246' promoting its transcriptional repressor activity by increasing its accumulation in the nucleus. In podocytes, promotes NR3C2 nuclear localization. Required for atypical chemokine receptor ACKR2-induced phosphorylation of LIMK1 and cofilin (CFL1) and for the up-regulation of ACKR2 from endosomal compartment to cell membrane, increasing its efficiency in chemokine uptake and degradation. In synapses, seems to mediate the regulation of F-actin cluster formation performed by SHANK3, maybe through CFL1 phosphorylation and inactivation. Plays a role in RUFY3-mediated facilitating gastric cancer cells migration and invasion. In response to DNA damage, phosphorylates MORC2 which activates its ATPase activity and facilitates chromatin remodeling. In neurons, plays a crucial role in regulating GABA(A) receptor synaptic stability and hence GABAergic inhibitory synaptic transmission through its role in F-actin stabilization. In hippocampal neurons, necessary for the formation of dendritic spines and excitatory synapses; this function is dependent on kinase activity and may be exerted by the regulation of actomyosin contractility through the phosphorylation of myosin II regulatory light chain (MLC). Along with GIT1, positively regulates microtubule nucleation during interphase. Phosphorylates FXR1, promoting its localization to stress granules and activity. Phosphorylates ILK on 'Thr-173' and 'Ser-246', promoting nuclear export of ILK. The chain is Serine/threonine-protein kinase PAK 1 from Homo sapiens (Human).